A 229-amino-acid chain; its full sequence is Artemin (229 aa).

A1 carries the N-acetylalanine modification. The Ferritin-like diiron domain maps to 25–173 (HNFDPECEKA…DCLSNLHCIG (149 aa)).

This sequence belongs to the ferritin family.

This chain is Artemin, found in Artemia salina (Brine shrimp).